Consider the following 171-residue polypeptide: NADH-quinone oxidoreductase subunit B 1 (171 aa).

[4Fe-4S] cluster contacts are provided by cysteine 44, cysteine 45, cysteine 110, and cysteine 139.

The protein belongs to the complex I 20 kDa subunit family. As to quaternary structure, NDH-1 is composed of 14 different subunits. Subunits NuoB, C, D, E, F, and G constitute the peripheral sector of the complex. [4Fe-4S] cluster is required as a cofactor.

It is found in the cell inner membrane. The enzyme catalyses a quinone + NADH + 5 H(+)(in) = a quinol + NAD(+) + 4 H(+)(out). In terms of biological role, NDH-1 shuttles electrons from NADH, via FMN and iron-sulfur (Fe-S) centers, to quinones in the respiratory chain. The immediate electron acceptor for the enzyme in this species is believed to be ubiquinone. Couples the redox reaction to proton translocation (for every two electrons transferred, four hydrogen ions are translocated across the cytoplasmic membrane), and thus conserves the redox energy in a proton gradient. This is NADH-quinone oxidoreductase subunit B 1 from Opitutus terrae (strain DSM 11246 / JCM 15787 / PB90-1).